The chain runs to 159 residues: Phosphopantetheine adenylyltransferase (159 aa).

Position 8 (serine 8) interacts with substrate. ATP contacts are provided by residues 8-9 (SF) and histidine 16. 3 residues coordinate substrate: lysine 40, leucine 72, and arginine 86. ATP-binding positions include 87–89 (GLR), glutamate 97, and 122–128 (YSFISSS).

Belongs to the bacterial CoaD family. Homohexamer. Mg(2+) serves as cofactor.

The protein resides in the cytoplasm. The catalysed reaction is (R)-4'-phosphopantetheine + ATP + H(+) = 3'-dephospho-CoA + diphosphate. It functions in the pathway cofactor biosynthesis; coenzyme A biosynthesis; CoA from (R)-pantothenate: step 4/5. In terms of biological role, reversibly transfers an adenylyl group from ATP to 4'-phosphopantetheine, yielding dephospho-CoA (dPCoA) and pyrophosphate. The protein is Phosphopantetheine adenylyltransferase of Thermosipho melanesiensis (strain DSM 12029 / CIP 104789 / BI429).